A 224-amino-acid chain; its full sequence is Cerebellin-2 (224 aa).

Residues 1-51 (MPAPGQGPRGPLLSMPGRRGALREPADFGSSLGAVLALLLLLLPACCPVRA) form the signal peptide. 2 N-linked (GlcNAc...) asparagine glycosylation sites follow: Asn-53 and Asn-110. The C1q domain maps to 88–224 (SGSAKVAFSA…TFSGFLVFPL (137 aa)).

In terms of assembly, homohexamer; disulfide-linked homotrimers. The trimers are assembled via the globular C1q domains. The trimers associate via N-terminal cysteine residues to form disulfide-linked hexamers. May form homooligomers or heterooligomers with CBLN1 and CBLN3 prior to secretion. Once secreted, does not interact with other CBLN family members. Interacts with GRID2, and more weakly with GRID1. Interacts with NRXN1 and NRXN2 long and short isoforms produced by alternative promoter usage. Weakly interacts with NRXN3 short isoform and not at all with NRXN3 long isoform. In terms of tissue distribution, expressed in various brain regions with higher levels in the olfactory bulb, cerebral cortex, certain thalamic and hypothalamic nuclei, superior and inferior colliculi and some brainstem nuclei. Highly expressed in the dorsal medial habenula.

The protein localises to the secreted. Functionally, acts as a synaptic organizer in specific subsets of neurons in the brain. Essential for long-term maintenance but not establishment of excitatory synapses. Functions as part of a trans-synaptic complex by binding to postsynaptic GRID1 and presynaptic neurexins. This interaction helps regulate the activity of NMDA and AMPA receptors at hippocampal synapses without affecting synapse formation. NRXN1B-CBLN2-GRID1 complex transduce presynaptic signals into postsynaptic NMDAR response. NRXN3B-CBLN2-GRID1 complex transduce presynaptic signals into postsynaptic AMPAR response. The sequence is that of Cerebellin-2 (Cbln2) from Mus musculus (Mouse).